The following is a 100-amino-acid chain: Large ribosomal subunit protein uL23 (100 aa).

The protein belongs to the universal ribosomal protein uL23 family. As to quaternary structure, part of the 50S ribosomal subunit. Contacts protein L29, and trigger factor when it is bound to the ribosome.

Functionally, one of the early assembly proteins it binds 23S rRNA. One of the proteins that surrounds the polypeptide exit tunnel on the outside of the ribosome. Forms the main docking site for trigger factor binding to the ribosome. In Parasynechococcus marenigrum (strain WH8102), this protein is Large ribosomal subunit protein uL23.